A 632-amino-acid polypeptide reads, in one-letter code: Probable potassium transport system protein Kup (632 aa).

A run of 12 helical transmembrane segments spans residues Leu-17–Leu-37, Leu-60–Leu-80, Thr-106–Ile-126, Leu-146–Ser-166, Phe-175–Ile-195, Ala-210–Leu-230, Trp-254–Leu-274, Ala-292–Ile-312, Ile-344–Phe-364, Leu-370–Phe-390, Leu-401–Ala-421, and Ile-426–Thr-446.

It belongs to the HAK/KUP transporter (TC 2.A.72) family.

It localises to the cell inner membrane. The enzyme catalyses K(+)(in) + H(+)(in) = K(+)(out) + H(+)(out). Its function is as follows. Transport of potassium into the cell. Likely operates as a K(+):H(+) symporter. The protein is Probable potassium transport system protein Kup of Rhizobium rhizogenes (Agrobacterium rhizogenes).